The following is a 419-amino-acid chain: Transcription factor IIIB 50 kDa subunit (419 aa).

Residues 2 to 36 (PGRGRCPDCGSTELVEDSHYSQSQLVCSDCGCVVT) form a TFIIB-type zinc finger. Residues Cys7, Cys10, Cys28, and Cys31 each coordinate Zn(2+). 2 consecutive repeat copies span residues 72–157 (GLRR…MQIV) and 173–249 (VKTY…SLAR). The segment at 108–114 (AARLQKK) is interaction with target DNA. Residues 314-326 (DGTAEVETREKEP) are compositionally biased toward basic and acidic residues. A disordered region spans residues 314-351 (DGTAEVETREKEPPGWGQGQGEGEVGNNSLGLPQGKRP). At Ser353 the chain carries Phosphoserine. The tract at residues 357–363 (LLPPCML) is required for the formation of a ternary complex with DNA and TBP; not required for interaction with TBP in the absence of DNA. Cys361 is modified (cysteine sulfenic acid (-SOH)). The tract at residues 365–419 (SPKRICPVPPVSTVTGDENISDSEIEQYLRTPQEVRDFQRAQAARQAATSVPNPP) is required for interaction with TBP and formation of a ternary complex with DNA and TBP.

This sequence belongs to the TFIIB family. As to quaternary structure, component of TFIIIB complexes. The TFIIIB complex has two activities, alpha and beta. The TFIIIB-alpha activity complex is composed of TBP, BDP1, and a complex containing both BRF2 and at least four stably associated proteins; this complex inhibits the transcription by pol III via its phosphorylation by CK2; YY1 facilitates the TFIIIB-alpha complex formation. Interacts with TBP; this interaction promotes recruitment of BRF2 to TATA box-containing promoters. Interacts with TBP and the BURE sequence (GC-rich sequence downstream from the TATA box) to form a strong ternary complex which is joined by BDP1; this ternary complex stimulates pol III transcription. Forms a trimeric complex composed of TBP, BRF2 and mini-SNAPc complex (SNAP43, SNAP50, and the N-terminal third of SNAP190) on the promoter. Assembly of the TBP-BRF2 complex is stimulated by SNAP190. Interacts with MAF1 and SNAPC4. In response to oxidative stress, Cys-361 is reversibly oxidized to cysteine sulfenic acid. Oxidation of Cys-361 impairs formation of a ternary complex with TBP and DNA and down-regulates expression of target genes in response to oxidative stress.

It is found in the nucleus. Functionally, general activator of RNA polymerase III transcription. Factor exclusively required for RNA polymerase III transcription of genes with promoter elements upstream of the initiation sites. Contributes to the regulation of gene expression; functions as activator in the absence of oxidative stress. Down-regulates expression of target genes in response to oxidative stress. Overexpression protects cells against apoptosis in response to oxidative stress. The chain is Transcription factor IIIB 50 kDa subunit (BRF2) from Homo sapiens (Human).